The following is a 73-amino-acid chain: Ocellatin-PT6 (73 aa).

Residues 1 to 22 (MAFLKKSLFLVLFLGLVSLSIC) form the signal peptide. The propeptide occupies 23-39 (DEEKRQDEDDDDDDDEE).

Expressed by the skin glands.

It localises to the secreted. Has antibacterial activity against Gram-negative bacterium E.coli ATCC 25922 (MIC=120 uM) but not against S.pneumoniae ATCC 700603, S.choleraesuis ATCC 14028 or against Gram-positive bacterium S.aureus ATCC 29313. Shows no hemolytic activity and no cytotoxicity. The sequence is that of Ocellatin-PT6 from Leptodactylus pustulatus (Ceara white-lipped frog).